A 418-amino-acid chain; its full sequence is Putative O-antigen transporter (418 aa).

Helical transmembrane passes span 8–28 (VWNL…LGFL), 37–57 (FGVY…DVGL), 85–105 (FLVL…DGIV), 124–144 (LLAI…ILEG), 165–185 (IPAI…GLIF), 217–237 (LFFF…MVYF), 251–271 (VAFY…PAAI), 297–317 (LLMF…SGLV), 334–354 (LNVL…FSAI), 362–382 (ITAL…YFMV), and 385–405 (YGLL…ALLL).

It belongs to the polysaccharide synthase family.

The protein resides in the cell inner membrane. The protein operates within bacterial outer membrane biogenesis; lipopolysaccharide biosynthesis. Functionally, could be an O-antigen transporter. This chain is Putative O-antigen transporter (rfbE), found in Shigella flexneri.